Reading from the N-terminus, the 277-residue chain is Phosphonoacetaldehyde hydrolase (277 aa).

The active-site Nucleophile is the Asp-20. Mg(2+)-binding residues include Asp-20 and Ala-22. The Schiff-base intermediate with substrate role is filled by Lys-61. Asp-194 is a binding site for Mg(2+).

Belongs to the HAD-like hydrolase superfamily. PhnX family. In terms of assembly, homodimer. Requires Mg(2+) as cofactor.

The catalysed reaction is phosphonoacetaldehyde + H2O = acetaldehyde + phosphate + H(+). Involved in phosphonate degradation. In Syntrophobacter fumaroxidans (strain DSM 10017 / MPOB), this protein is Phosphonoacetaldehyde hydrolase.